Consider the following 499-residue polypeptide: Bifunctional purine biosynthesis protein PurH (499 aa).

The region spanning Met1–Thr144 is the MGS-like domain.

This sequence belongs to the PurH family.

The catalysed reaction is (6R)-10-formyltetrahydrofolate + 5-amino-1-(5-phospho-beta-D-ribosyl)imidazole-4-carboxamide = 5-formamido-1-(5-phospho-D-ribosyl)imidazole-4-carboxamide + (6S)-5,6,7,8-tetrahydrofolate. It catalyses the reaction IMP + H2O = 5-formamido-1-(5-phospho-D-ribosyl)imidazole-4-carboxamide. The protein operates within purine metabolism; IMP biosynthesis via de novo pathway; 5-formamido-1-(5-phospho-D-ribosyl)imidazole-4-carboxamide from 5-amino-1-(5-phospho-D-ribosyl)imidazole-4-carboxamide (10-formyl THF route): step 1/1. It functions in the pathway purine metabolism; IMP biosynthesis via de novo pathway; IMP from 5-formamido-1-(5-phospho-D-ribosyl)imidazole-4-carboxamide: step 1/1. The chain is Bifunctional purine biosynthesis protein PurH from Clostridium botulinum (strain Loch Maree / Type A3).